We begin with the raw amino-acid sequence, 137 residues long: Holo-[acyl-carrier-protein] synthase (137 aa).

Residues D7 and E58 each contribute to the Mg(2+) site.

Belongs to the P-Pant transferase superfamily. AcpS family. Mg(2+) serves as cofactor.

The protein localises to the cytoplasm. It catalyses the reaction apo-[ACP] + CoA = holo-[ACP] + adenosine 3',5'-bisphosphate + H(+). Functionally, transfers the 4'-phosphopantetheine moiety from coenzyme A to a Ser of acyl-carrier-protein. This Chloroflexus aurantiacus (strain ATCC 29366 / DSM 635 / J-10-fl) protein is Holo-[acyl-carrier-protein] synthase.